Reading from the N-terminus, the 99-residue chain is NADH-quinone oxidoreductase subunit K (99 aa).

A run of 3 helical transmembrane segments spans residues 3-23 (PTYYLLLSALLFSIGAVGVLV), 28-48 (IVVFMCVELMLNAVNLTLVTF), and 59-79 (VMAFFVMVVAAAEVVVGLAII).

It belongs to the complex I subunit 4L family. In terms of assembly, NDH-1 is composed of 14 different subunits. Subunits NuoA, H, J, K, L, M, N constitute the membrane sector of the complex.

The protein localises to the cell membrane. It carries out the reaction a quinone + NADH + 5 H(+)(in) = a quinol + NAD(+) + 4 H(+)(out). In terms of biological role, NDH-1 shuttles electrons from NADH, via FMN and iron-sulfur (Fe-S) centers, to quinones in the respiratory chain. The immediate electron acceptor for the enzyme in this species is believed to be a menaquinone. Couples the redox reaction to proton translocation (for every two electrons transferred, four hydrogen ions are translocated across the cytoplasmic membrane), and thus conserves the redox energy in a proton gradient. The sequence is that of NADH-quinone oxidoreductase subunit K from Saccharopolyspora erythraea (strain ATCC 11635 / DSM 40517 / JCM 4748 / NBRC 13426 / NCIMB 8594 / NRRL 2338).